Reading from the N-terminus, the 687-residue chain is Polyphosphate kinase (687 aa).

N45 serves as a coordination point for ATP. Mg(2+)-binding residues include R375 and R405. The Phosphohistidine intermediate role is filled by H435. 3 residues coordinate ATP: Y472, R568, and H596.

The protein belongs to the polyphosphate kinase 1 (PPK1) family. Mg(2+) serves as cofactor. In terms of processing, an intermediate of this reaction is the autophosphorylated ppk in which a phosphate is covalently linked to a histidine residue through a N-P bond.

The catalysed reaction is [phosphate](n) + ATP = [phosphate](n+1) + ADP. Catalyzes the reversible transfer of the terminal phosphate of ATP to form a long-chain polyphosphate (polyP). The sequence is that of Polyphosphate kinase from Burkholderia ambifaria (strain ATCC BAA-244 / DSM 16087 / CCUG 44356 / LMG 19182 / AMMD) (Burkholderia cepacia (strain AMMD)).